Here is an 854-residue protein sequence, read N- to C-terminus: DNA gyrase subunit A (854 aa).

Residues 42–510 (LPEVRDGLKP…ADGQVSDEDL (469 aa)) form the Topo IIA-type catalytic domain. Y129 serves as the catalytic O-(5'-phospho-DNA)-tyrosine intermediate. A GyrA-box motif is present at residues 537–543 (QKRGGKG).

It belongs to the type II topoisomerase GyrA/ParC subunit family. In terms of assembly, heterotetramer, composed of two GyrA and two GyrB chains. In the heterotetramer, GyrA contains the active site tyrosine that forms a transient covalent intermediate with DNA, while GyrB binds cofactors and catalyzes ATP hydrolysis.

It localises to the cytoplasm. It carries out the reaction ATP-dependent breakage, passage and rejoining of double-stranded DNA.. DNA supercoiling is inhibited by the coumarin antibiotic novobiocin. Also inhibited by the fluoroquinolones ciprofloxacin and moxifloxacin. Its function is as follows. A type II topoisomerase that negatively supercoils closed circular double-stranded (ds) DNA in an ATP-dependent manner to modulate DNA topology and maintain chromosomes in an underwound state; also catalyzes the interconversion of other topological isomers of double-stranded DNA rings, including catenanes. At comparable concentrations has a stronger decatenation activity than E.coli, which is inhibited by ciprofloxacin and novobiocin. Cleaves dsDNA at the sequence 5'-AT/GGCC-3', leaving a 4 base overhang. Relaxes negatively supercoiled DNA in an ATP-independent manner. Functionally, negative supercoiling favors strand separation, and DNA replication, transcription, recombination and repair, all of which involve strand separation. Type II topoisomerases break and join 2 DNA strands simultaneously in an ATP-dependent manner. The polypeptide is DNA gyrase subunit A (Mycolicibacterium smegmatis (Mycobacterium smegmatis)).